The primary structure comprises 204 residues: Holliday junction branch migration complex subunit RuvA (204 aa).

Positions 1–64 (MIGRLRGILL…EDAQLLYGFN (64 aa)) are domain I. Residues 65 to 143 (TVKERALFRE…GWGAGDLFTP (79 aa)) are domain II. Residues 144-155 (FTDAAPTDSAAA) form a flexible linker region. Positions 156–204 (SSNSAEEEAVSALLALGYKPTQASKVVSQIAKPDMSSEQLIREALKSMV) are domain III.

It belongs to the RuvA family. Homotetramer. Forms an RuvA(8)-RuvB(12)-Holliday junction (HJ) complex. HJ DNA is sandwiched between 2 RuvA tetramers; dsDNA enters through RuvA and exits via RuvB. An RuvB hexamer assembles on each DNA strand where it exits the tetramer. Each RuvB hexamer is contacted by two RuvA subunits (via domain III) on 2 adjacent RuvB subunits; this complex drives branch migration. In the full resolvosome a probable DNA-RuvA(4)-RuvB(12)-RuvC(2) complex forms which resolves the HJ.

The protein localises to the cytoplasm. Functionally, the RuvA-RuvB-RuvC complex processes Holliday junction (HJ) DNA during genetic recombination and DNA repair, while the RuvA-RuvB complex plays an important role in the rescue of blocked DNA replication forks via replication fork reversal (RFR). RuvA specifically binds to HJ cruciform DNA, conferring on it an open structure. The RuvB hexamer acts as an ATP-dependent pump, pulling dsDNA into and through the RuvAB complex. HJ branch migration allows RuvC to scan DNA until it finds its consensus sequence, where it cleaves and resolves the cruciform DNA. The polypeptide is Holliday junction branch migration complex subunit RuvA (Vibrio parahaemolyticus serotype O3:K6 (strain RIMD 2210633)).